The primary structure comprises 540 residues: Calnexin homolog (540 aa).

The N-terminal stretch at 1–29 is a signal peptide; the sequence is MELSRRKMCCYIQFCCFVLIGCFISQICA. The Lumenal portion of the chain corresponds to 30–469; sequence SSDAIFYESF…EKAETQPNIT (440 aa). Residues Ser38 and Asp69 each coordinate Ca(2+). A disulfide bridge connects residues Cys112 and Cys147. An alpha-D-glucoside is bound by residues Tyr116, Lys118, Tyr138, and Asp145. The interval 221-301 is disordered; sequence LIPTKTIPDP…DWDDEEDGEW (81 aa). A p domain (Extended arm) region spans residues 227-360; sequence IPDPDDKKPE…REIPNPDYFE (134 aa). Positions 228-253 are enriched in basic and acidic residues; sequence PDPDDKKPEDWDERAKIPDPEATKPD. A run of 5 repeats spans residues 229–240, 246–257, 265–276, 284–295, and 299–309. 4 X approximate repeats stretches follow at residues 229–295 and 299–356; these read DPDD…DWDD and GEWE…IPNP. Composition is skewed to acidic residues over residues 254–285 and 292–301; these read DWDE…IDDP and DWDDEEDGEW. Cys311 and Cys317 form a disulfide bridge. 3 tandem repeats follow at residues 318-328, 332-342, and 346-356. Glu375 contacts an alpha-D-glucoside. Asp386 serves as a coordination point for Ca(2+). A glycan (N-linked (GlcNAc...) asparagine) is linked at Asn467. Residues 470–490 form a helical membrane-spanning segment; that stretch reads IGVIVSIIVVIFSILLKLLFG. The Cytoplasmic portion of the chain corresponds to 491–540; the sequence is GKKAAPKVNVVPKKKEEPEASNTAEVREGEEEKTEGEVAAAPRRRPRRDT. Positions 499–540 are disordered; it reads NVVPKKKEEPEASNTAEVREGEEEKTEGEVAAAPRRRPRRDT.

This sequence belongs to the calreticulin family.

The protein resides in the endoplasmic reticulum membrane. In terms of biological role, calcium-binding protein that interacts with newly synthesized monoglucosylated glycoproteins in the endoplasmic reticulum. It may act in assisting protein assembly and/or in the retention within the ER of unassembled protein subunits. It seems to play a major role in the quality control apparatus of the ER by the retention of incorrectly folded proteins. This chain is Calnexin homolog, found in Helianthus tuberosus (Jerusalem artichoke).